The primary structure comprises 161 residues: Cyclic pyranopterin monophosphate synthase (161 aa).

Substrate-binding positions include 75-77 (LCH) and 113-114 (ME). Residue Asp128 is part of the active site.

It belongs to the MoaC family. In terms of assembly, homohexamer; trimer of dimers.

It catalyses the reaction (8S)-3',8-cyclo-7,8-dihydroguanosine 5'-triphosphate = cyclic pyranopterin phosphate + diphosphate. Its pathway is cofactor biosynthesis; molybdopterin biosynthesis. Catalyzes the conversion of (8S)-3',8-cyclo-7,8-dihydroguanosine 5'-triphosphate to cyclic pyranopterin monophosphate (cPMP). The chain is Cyclic pyranopterin monophosphate synthase from Escherichia coli O9:H4 (strain HS).